The following is a 321-amino-acid chain: tRNA U34 carboxymethyltransferase (321 aa).

Residues Lys90, Trp104, Lys109, Gly129, 151–153 (DPT), 180–181 (IE), Met195, Tyr199, and Arg314 each bind carboxy-S-adenosyl-L-methionine.

Belongs to the class I-like SAM-binding methyltransferase superfamily. CmoB family. Homotetramer.

It carries out the reaction carboxy-S-adenosyl-L-methionine + 5-hydroxyuridine(34) in tRNA = 5-carboxymethoxyuridine(34) in tRNA + S-adenosyl-L-homocysteine + H(+). Its function is as follows. Catalyzes carboxymethyl transfer from carboxy-S-adenosyl-L-methionine (Cx-SAM) to 5-hydroxyuridine (ho5U) to form 5-carboxymethoxyuridine (cmo5U) at position 34 in tRNAs. This chain is tRNA U34 carboxymethyltransferase, found in Histophilus somni (strain 129Pt) (Haemophilus somnus).